A 97-amino-acid chain; its full sequence is Glutamyl-tRNA(Gln) amidotransferase subunit C (97 aa).

Belongs to the GatC family. As to quaternary structure, heterotrimer of A, B and C subunits.

The enzyme catalyses L-glutamyl-tRNA(Gln) + L-glutamine + ATP + H2O = L-glutaminyl-tRNA(Gln) + L-glutamate + ADP + phosphate + H(+). It carries out the reaction L-aspartyl-tRNA(Asn) + L-glutamine + ATP + H2O = L-asparaginyl-tRNA(Asn) + L-glutamate + ADP + phosphate + 2 H(+). In terms of biological role, allows the formation of correctly charged Asn-tRNA(Asn) or Gln-tRNA(Gln) through the transamidation of misacylated Asp-tRNA(Asn) or Glu-tRNA(Gln) in organisms which lack either or both of asparaginyl-tRNA or glutaminyl-tRNA synthetases. The reaction takes place in the presence of glutamine and ATP through an activated phospho-Asp-tRNA(Asn) or phospho-Glu-tRNA(Gln). The chain is Glutamyl-tRNA(Gln) amidotransferase subunit C from Sulfurisphaera tokodaii (strain DSM 16993 / JCM 10545 / NBRC 100140 / 7) (Sulfolobus tokodaii).